The primary structure comprises 703 residues: Elongation factor G (703 aa).

One can recognise a tr-type G domain in the interval 10–286 (NKVRNIGIMA…AVVKFLPSPL (277 aa)). GTP contacts are provided by residues 19–26 (AHIDAGKT), 83–87 (DTPGH), and 137–140 (NKLD).

Belongs to the TRAFAC class translation factor GTPase superfamily. Classic translation factor GTPase family. EF-G/EF-2 subfamily.

Its subcellular location is the cytoplasm. In terms of biological role, catalyzes the GTP-dependent ribosomal translocation step during translation elongation. During this step, the ribosome changes from the pre-translocational (PRE) to the post-translocational (POST) state as the newly formed A-site-bound peptidyl-tRNA and P-site-bound deacylated tRNA move to the P and E sites, respectively. Catalyzes the coordinated movement of the two tRNA molecules, the mRNA and conformational changes in the ribosome. This chain is Elongation factor G, found in Nocardioides sp. (strain ATCC BAA-499 / JS614).